Consider the following 137-residue polypeptide: Large ribosomal subunit protein uL16 (137 aa).

It belongs to the universal ribosomal protein uL16 family. Part of the 50S ribosomal subunit.

In terms of biological role, binds 23S rRNA and is also seen to make contacts with the A and possibly P site tRNAs. In Tolumonas auensis (strain DSM 9187 / NBRC 110442 / TA 4), this protein is Large ribosomal subunit protein uL16.